The primary structure comprises 841 residues: Translation initiation factor IF-2 (841 aa).

Residues 94–258 (QRSPEEIEAE…HGFQSPTGPV (165 aa)) form a disordered region. Residues 96 to 136 (SPEEIEAERKRELEERRAVENAARQKAEEEAKRRAEEEARR) show a composition bias toward basic and acidic residues. Low complexity predominate over residues 137–173 (QPAAAQPAGTEAVAAPVAPVEAVREAAPVAAAPAPAA). 3 stretches are compositionally biased toward basic and acidic residues: residues 174-194 (DARKRDEPRRPDKPRADDNNR), 200-217 (DGERKNAPHRASVKEKAP), and 225-234 (TTDEESDGFR). Over residues 235-248 (RGGRGKAKLKKRNA) the composition is skewed to basic residues. A tr-type G domain is found at 341–510 (SRAPVVTVMG…LLQAEVLELK (170 aa)). The segment at 350–357 (GHVDHGKT) is G1. 350 to 357 (GHVDHGKT) contributes to the GTP binding site. Residues 375–379 (GITQH) are G2. Positions 396–399 (DTPG) are G3. GTP-binding positions include 396–400 (DTPGH) and 450–453 (NKID). Residues 450–453 (NKID) form a G4 region. A G5 region spans residues 486-488 (SAK).

The protein belongs to the TRAFAC class translation factor GTPase superfamily. Classic translation factor GTPase family. IF-2 subfamily.

It is found in the cytoplasm. Functionally, one of the essential components for the initiation of protein synthesis. Protects formylmethionyl-tRNA from spontaneous hydrolysis and promotes its binding to the 30S ribosomal subunits. Also involved in the hydrolysis of GTP during the formation of the 70S ribosomal complex. This Pseudomonas fluorescens (strain SBW25) protein is Translation initiation factor IF-2.